A 99-amino-acid chain; its full sequence is Malonate decarboxylase acyl carrier protein (99 aa).

Ser25 carries the post-translational modification O-(phosphoribosyl dephospho-coenzyme A)serine.

Belongs to the MdcC family. In terms of processing, covalently binds the prosthetic group of malonate decarboxylase.

The protein localises to the cytoplasm. Subunit of malonate decarboxylase, it is an acyl carrier protein to which acetyl and malonyl thioester residues are bound via a 2'-(5''-phosphoribosyl)-3'-dephospho-CoA prosthetic group and turn over during the catalytic mechanism. The protein is Malonate decarboxylase acyl carrier protein of Pseudomonas putida (strain W619).